Here is a 66-residue protein sequence, read N- to C-terminus: DNA gyrase inhibitor YacG (66 aa).

Positions 9, 12, 28, and 32 each coordinate Zn(2+).

The protein belongs to the DNA gyrase inhibitor YacG family. Interacts with GyrB. It depends on Zn(2+) as a cofactor.

Inhibits all the catalytic activities of DNA gyrase by preventing its interaction with DNA. Acts by binding directly to the C-terminal domain of GyrB, which probably disrupts DNA binding by the gyrase. The chain is DNA gyrase inhibitor YacG from Pseudomonas fluorescens (strain Pf0-1).